The following is a 302-amino-acid chain: Probable alpha-L-glutamate ligase (302 aa).

The 184-residue stretch at 104–287 (MQLLSRKGIG…IAGMVFEFLE (184 aa)) folds into the ATP-grasp domain. ATP contacts are provided by residues K141, 178–179 (EF), D187, and 211–213 (RSN). Mg(2+)-binding residues include D248, E260, and N262. 3 residues coordinate Mn(2+): D248, E260, and N262.

This sequence belongs to the RimK family. Mg(2+) is required as a cofactor. The cofactor is Mn(2+).

The sequence is that of Probable alpha-L-glutamate ligase from Psychromonas ingrahamii (strain DSM 17664 / CCUG 51855 / 37).